A 372-amino-acid polypeptide reads, in one-letter code: UDP-N-acetylglucosamine--N-acetylmuramyl-(pentapeptide) pyrophosphoryl-undecaprenol N-acetylglucosamine transferase (372 aa).

Residues 11 to 13 (TAG), Asn123, Arg160, Ser200, and Gln298 contribute to the UDP-N-acetyl-alpha-D-glucosamine site.

It belongs to the glycosyltransferase 28 family. MurG subfamily.

It localises to the cell membrane. The enzyme catalyses di-trans,octa-cis-undecaprenyl diphospho-N-acetyl-alpha-D-muramoyl-L-alanyl-D-glutamyl-meso-2,6-diaminopimeloyl-D-alanyl-D-alanine + UDP-N-acetyl-alpha-D-glucosamine = di-trans,octa-cis-undecaprenyl diphospho-[N-acetyl-alpha-D-glucosaminyl-(1-&gt;4)]-N-acetyl-alpha-D-muramoyl-L-alanyl-D-glutamyl-meso-2,6-diaminopimeloyl-D-alanyl-D-alanine + UDP + H(+). The protein operates within cell wall biogenesis; peptidoglycan biosynthesis. Functionally, cell wall formation. Catalyzes the transfer of a GlcNAc subunit on undecaprenyl-pyrophosphoryl-MurNAc-pentapeptide (lipid intermediate I) to form undecaprenyl-pyrophosphoryl-MurNAc-(pentapeptide)GlcNAc (lipid intermediate II). This Cutibacterium acnes (strain DSM 16379 / KPA171202) (Propionibacterium acnes) protein is UDP-N-acetylglucosamine--N-acetylmuramyl-(pentapeptide) pyrophosphoryl-undecaprenol N-acetylglucosamine transferase.